The primary structure comprises 57 residues: uncharacterized protein (57 aa).

Residues 1 to 57 are disordered; it reads MITPIGKNSNSNSNSNSNSNSNSNSNSNSNSNSNSNSNSNSNSNSNSNSNSNSNSNN. Residues 8–57 show a composition bias toward low complexity; sequence NSNSNSNSNSNSNSNSNSNSNSNSNSNSNSNSNSNSNSNSNSNSNSNSNN.

This is an uncharacterized protein from Dictyostelium discoideum (Social amoeba).